Consider the following 424-residue polypeptide: Glutamyl-tRNA reductase (424 aa).

Substrate contacts are provided by residues 49–52 (TCNR), Ser105, 110–112 (EPQ), and Gln116. Catalysis depends on Cys50, which acts as the Nucleophile. NADP(+) is bound at residue 185-190 (GSGETA).

The protein belongs to the glutamyl-tRNA reductase family. In terms of assembly, homodimer.

The catalysed reaction is (S)-4-amino-5-oxopentanoate + tRNA(Glu) + NADP(+) = L-glutamyl-tRNA(Glu) + NADPH + H(+). It functions in the pathway porphyrin-containing compound metabolism; protoporphyrin-IX biosynthesis; 5-aminolevulinate from L-glutamyl-tRNA(Glu): step 1/2. Its function is as follows. Catalyzes the NADPH-dependent reduction of glutamyl-tRNA(Glu) to glutamate 1-semialdehyde (GSA). The sequence is that of Glutamyl-tRNA reductase from Legionella pneumophila (strain Paris).